We begin with the raw amino-acid sequence, 81 residues long: Photosystem I iron-sulfur center (81 aa).

4Fe-4S ferredoxin-type domains are found at residues 2-31 (SHSV…MIPW) and 39-68 (IASA…VRVY). Residues Cys-11, Cys-14, Cys-17, Cys-21, Cys-48, Cys-51, Cys-54, and Cys-58 each contribute to the [4Fe-4S] cluster site.

The eukaryotic PSI reaction center is composed of at least 11 subunits. The cofactor is [4Fe-4S] cluster.

The protein resides in the plastid. It localises to the chloroplast thylakoid membrane. It carries out the reaction reduced [plastocyanin] + hnu + oxidized [2Fe-2S]-[ferredoxin] = oxidized [plastocyanin] + reduced [2Fe-2S]-[ferredoxin]. Functionally, apoprotein for the two 4Fe-4S centers FA and FB of photosystem I (PSI); essential for photochemical activity. FB is the terminal electron acceptor of PSI, donating electrons to ferredoxin. The C-terminus interacts with PsaA/B/D and helps assemble the protein into the PSI complex. Required for binding of PsaD and PsaE to PSI. PSI is a plastocyanin-ferredoxin oxidoreductase, converting photonic excitation into a charge separation, which transfers an electron from the donor P700 chlorophyll pair to the spectroscopically characterized acceptors A0, A1, FX, FA and FB in turn. The protein is Photosystem I iron-sulfur center of Vitis vinifera (Grape).